Consider the following 267-residue polypeptide: Protein PERCC1 (267 aa).

Disordered regions lie at residues 19–88 (HHPF…QLLR), 142–163 (SLEDEDTPEPRVPQGQVCRPGL), and 247–267 (ACPELPGRGTPALEGARPAEA). The segment covering 28–50 (EPPETSEEEEEEEEEEEEEEGEG) has biased composition (acidic residues). A compositionally biased stretch (low complexity) spans 74 to 83 (PEGPGSPETP).

Functionally, plays a critical role in intestinal function. Acts by promoting the development of enteroendocrine cells (EECs) of the gastrointestinal tract and pancreas. It is thereby required for normal enteroendocrine peptide hormone secretion. The protein is Protein PERCC1 of Homo sapiens (Human).